Reading from the N-terminus, the 214-residue chain is ATP phosphoribosyltransferase (214 aa).

Belongs to the ATP phosphoribosyltransferase family. Short subfamily. Heteromultimer composed of HisG and HisZ subunits.

It is found in the cytoplasm. The enzyme catalyses 1-(5-phospho-beta-D-ribosyl)-ATP + diphosphate = 5-phospho-alpha-D-ribose 1-diphosphate + ATP. Its pathway is amino-acid biosynthesis; L-histidine biosynthesis; L-histidine from 5-phospho-alpha-D-ribose 1-diphosphate: step 1/9. In terms of biological role, catalyzes the condensation of ATP and 5-phosphoribose 1-diphosphate to form N'-(5'-phosphoribosyl)-ATP (PR-ATP). Has a crucial role in the pathway because the rate of histidine biosynthesis seems to be controlled primarily by regulation of HisG enzymatic activity. This chain is ATP phosphoribosyltransferase, found in Alcanivorax borkumensis (strain ATCC 700651 / DSM 11573 / NCIMB 13689 / SK2).